The primary structure comprises 97 residues: Protein transport protein SFT1 (97 aa).

Topologically, residues 1–74 are cytoplasmic; that stretch reads MSNSRYSQTE…RLTRSLKAGN (74 aa). One can recognise a t-SNARE coiled-coil homology domain in the interval 7–69; that stretch reads SQTESNNDRK…KNSSSRLTRS (63 aa). The chain crosses the membrane as a helical; Anchor for type IV membrane protein span at residues 75–94; sequence SIWRMVGLALLIFFILYTLF. Residues 95–97 are Lumenal-facing; sequence KLF.

Component of a SNARE complex consisting of SED5, GOS1, YKT6 and SFT1.

The protein localises to the golgi apparatus membrane. In terms of biological role, vesicle SNARE required for retrograde transport within the Golgi complex. The sequence is that of Protein transport protein SFT1 (SFT1) from Saccharomyces cerevisiae (strain ATCC 204508 / S288c) (Baker's yeast).